Consider the following 388-residue polypeptide: Xylose isomerase (388 aa).

Residues H54 and D57 contribute to the active site. Residues E181, E217, H220, D245, D255, D257, and D287 each coordinate Mg(2+).

Belongs to the xylose isomerase family. As to quaternary structure, homotetramer. Requires Mg(2+) as cofactor.

It localises to the cytoplasm. The catalysed reaction is alpha-D-xylose = alpha-D-xylulofuranose. This is Xylose isomerase from Streptomyces olivaceoviridis (Streptomyces corchorusii).